The following is a 309-amino-acid chain: DnaJ protein ERDJ7 (309 aa).

A signal peptide spans 1–36 (MSQVGSAGEGSNSMAAAPPPRLLLLVVLLLVPVSNA). The Lumenal segment spans residues 37-130 (IYCEEDDCYD…YRAYYGHKTD (94 aa)). One can recognise a J domain in the interval 43-107 (DCYDLLGVKQ…STRGQYDYAI (65 aa)). An N-linked (GlcNAc...) asparagine glycan is attached at Asn-55. The helical transmembrane segment at 131–151 (PRAVLIGLLLIISAFQYLNQF) threads the bilayer. Residues 152 to 219 (GRYSKAIETV…GVEKPSLWRL (68 aa)) lie on the Cytoplasmic side of the membrane. Residues 220 to 242 (YGVQFILLPYSIGKVLSWKFCWF) form a helical membrane-spanning segment. At 243-309 (WRYRIKKLPY…EMRKESKRRR (67 aa)) the chain is on the lumenal side.

It localises to the endoplasmic reticulum membrane. Functionally, may play a role in protein folding in the endoplasmic reticulum. In Oryza sativa subsp. japonica (Rice), this protein is DnaJ protein ERDJ7.